We begin with the raw amino-acid sequence, 672 residues long: Glycine--tRNA ligase beta subunit (672 aa).

This sequence belongs to the class-II aminoacyl-tRNA synthetase family. As to quaternary structure, tetramer of two alpha and two beta subunits.

It localises to the cytoplasm. It carries out the reaction tRNA(Gly) + glycine + ATP = glycyl-tRNA(Gly) + AMP + diphosphate. The sequence is that of Glycine--tRNA ligase beta subunit (glyS) from Thermotoga maritima (strain ATCC 43589 / DSM 3109 / JCM 10099 / NBRC 100826 / MSB8).